The following is a 619-amino-acid chain: Dihydroxy-acid dehydratase 1 (619 aa).

Position 81 (Asp81) interacts with Mg(2+). Position 122 (Cys122) interacts with [2Fe-2S] cluster. Residues Asp123 and Lys124 each coordinate Mg(2+). Lys124 is modified (N6-carboxylysine). Cys201 lines the [2Fe-2S] cluster pocket. Glu496 contributes to the Mg(2+) binding site. Residue Ser522 is the Proton acceptor of the active site.

This sequence belongs to the IlvD/Edd family. Homodimer. It depends on [2Fe-2S] cluster as a cofactor. Mg(2+) serves as cofactor.

It carries out the reaction (2R)-2,3-dihydroxy-3-methylbutanoate = 3-methyl-2-oxobutanoate + H2O. The catalysed reaction is (2R,3R)-2,3-dihydroxy-3-methylpentanoate = (S)-3-methyl-2-oxopentanoate + H2O. It participates in amino-acid biosynthesis; L-isoleucine biosynthesis; L-isoleucine from 2-oxobutanoate: step 3/4. Its pathway is amino-acid biosynthesis; L-valine biosynthesis; L-valine from pyruvate: step 3/4. Functions in the biosynthesis of branched-chain amino acids. Catalyzes the dehydration of (2R,3R)-2,3-dihydroxy-3-methylpentanoate (2,3-dihydroxy-3-methylvalerate) into 2-oxo-3-methylpentanoate (2-oxo-3-methylvalerate) and of (2R)-2,3-dihydroxy-3-methylbutanoate (2,3-dihydroxyisovalerate) into 2-oxo-3-methylbutanoate (2-oxoisovalerate), the penultimate precursor to L-isoleucine and L-valine, respectively. This chain is Dihydroxy-acid dehydratase 1, found in Burkholderia lata (strain ATCC 17760 / DSM 23089 / LMG 22485 / NCIMB 9086 / R18194 / 383).